The primary structure comprises 275 residues: NH(3)-dependent NAD(+) synthetase (275 aa).

50–57 (GISGGVDS) serves as a coordination point for ATP. D56 is a Mg(2+) binding site. R147 provides a ligand contact to deamido-NAD(+). ATP is bound at residue T167. E172 is a binding site for Mg(2+). Residues K180 and D187 each contribute to the deamido-NAD(+) site. The ATP site is built by K196 and T218. 267–268 (HK) is a deamido-NAD(+) binding site.

Belongs to the NAD synthetase family. Homodimer.

It carries out the reaction deamido-NAD(+) + NH4(+) + ATP = AMP + diphosphate + NAD(+) + H(+). Its pathway is cofactor biosynthesis; NAD(+) biosynthesis; NAD(+) from deamido-NAD(+) (ammonia route): step 1/1. Its function is as follows. Catalyzes the ATP-dependent amidation of deamido-NAD to form NAD. Uses ammonia as a nitrogen source. The polypeptide is NH(3)-dependent NAD(+) synthetase (Pseudomonas putida (strain ATCC 47054 / DSM 6125 / CFBP 8728 / NCIMB 11950 / KT2440)).